Here is a 137-residue protein sequence, read N- to C-terminus: Nucleoside diphosphate kinase (137 aa).

ATP is bound by residues Lys-9, Phe-57, Arg-85, Thr-91, and Arg-102. Catalysis depends on His-119, which acts as the Pros-phosphohistidine intermediate.

It belongs to the NDK family. In terms of assembly, homotetramer. The cofactor is Mg(2+).

The protein resides in the cytoplasm. It carries out the reaction a 2'-deoxyribonucleoside 5'-diphosphate + ATP = a 2'-deoxyribonucleoside 5'-triphosphate + ADP. The catalysed reaction is a ribonucleoside 5'-diphosphate + ATP = a ribonucleoside 5'-triphosphate + ADP. In terms of biological role, major role in the synthesis of nucleoside triphosphates other than ATP. The ATP gamma phosphate is transferred to the NDP beta phosphate via a ping-pong mechanism, using a phosphorylated active-site intermediate. This Streptococcus thermophilus (strain CNRZ 1066) protein is Nucleoside diphosphate kinase.